Consider the following 148-residue polypeptide: UPF0260 protein PC1_1943 (148 aa).

Belongs to the UPF0260 family.

The polypeptide is UPF0260 protein PC1_1943 (Pectobacterium carotovorum subsp. carotovorum (strain PC1)).